The sequence spans 338 residues: MNFTGAHILSIQQFQREDINRIFDVADAMEPYALRRRVTRVLEGAILGNMFFEPSTRTRVSFGAAFNLLGGNVRETTGFESSSLTKGESLFDTARVLSGYSDVICMRHPAAGSVAEFAEGSRVPVINGGDGPNEHPTQALLDLYTIRKELRSKGRGIDDLRIAMIGDLKHGRTVHSLCKLLGLFNNVSITLVSPKELAMPDYIVEDLRQAGHKVTITDDLPTSITHIDIAYSTRIQEERFASKEEADSYRGRFRLNQAIYTQFCEPNTVIMHPLPRDSRAEANELDNDLNTNPNLAIFRQADNGVLVRMALFALVLDVADQVDKYAREVRWFSSLRAN.

Positions 57 and 58 each coordinate carbamoyl phosphate. Lysine 86 is an L-aspartate binding site. Residues arginine 107, histidine 135, and glutamine 138 each contribute to the carbamoyl phosphate site. Residues arginine 172 and arginine 234 each contribute to the L-aspartate site. 2 residues coordinate carbamoyl phosphate: leucine 274 and proline 275.

The protein belongs to the aspartate/ornithine carbamoyltransferase superfamily. ATCase family. As to quaternary structure, heterododecamer (2C3:3R2) of six catalytic PyrB chains organized as two trimers (C3), and six regulatory PyrI chains organized as three dimers (R2).

The catalysed reaction is carbamoyl phosphate + L-aspartate = N-carbamoyl-L-aspartate + phosphate + H(+). It functions in the pathway pyrimidine metabolism; UMP biosynthesis via de novo pathway; (S)-dihydroorotate from bicarbonate: step 2/3. In terms of biological role, catalyzes the condensation of carbamoyl phosphate and aspartate to form carbamoyl aspartate and inorganic phosphate, the committed step in the de novo pyrimidine nucleotide biosynthesis pathway. This Cellvibrio japonicus (strain Ueda107) (Pseudomonas fluorescens subsp. cellulosa) protein is Aspartate carbamoyltransferase catalytic subunit.